Here is a 394-residue protein sequence, read N- to C-terminus: GDSL esterase/lipase At2g27360 (394 aa).

Positions 1-24 are cleaved as a signal peptide; sequence MASQDCHMLLSFFISTFLITVVTS. Ser-40 functions as the Nucleophile in the catalytic mechanism. N-linked (GlcNAc...) asparagine glycosylation is found at Asn-136 and Asn-319. Residues Asp-344 and His-347 contribute to the active site. Asn-371 and Asn-382 each carry an N-linked (GlcNAc...) asparagine glycan.

It belongs to the 'GDSL' lipolytic enzyme family.

It localises to the secreted. This is GDSL esterase/lipase At2g27360 from Arabidopsis thaliana (Mouse-ear cress).